The following is a 451-amino-acid chain: Tubulin alpha-2 chain (451 aa).

GTP is bound at residue glutamine 11. Lysine 40 carries the N6-acetyllysine modification. GTP-binding residues include glutamate 71, serine 140, glycine 144, threonine 145, threonine 179, asparagine 206, and asparagine 228. A Mg(2+)-binding site is contributed by glutamate 71. Glutamate 254 is a catalytic residue. Residues tyrosine 432–tyrosine 451 are disordered.

It belongs to the tubulin family. Dimer of alpha and beta chains. A typical microtubule is a hollow water-filled tube with an outer diameter of 25 nm and an inner diameter of 15 nM. Alpha-beta heterodimers associate head-to-tail to form protofilaments running lengthwise along the microtubule wall with the beta-tubulin subunit facing the microtubule plus end conferring a structural polarity. Microtubules usually have 13 protofilaments but different protofilament numbers can be found in some organisms and specialized cells. Mg(2+) is required as a cofactor. In terms of processing, undergoes a tyrosination/detyrosination cycle, the cyclic removal and re-addition of a C-terminal tyrosine residue by the enzymes tubulin tyrosine carboxypeptidase (TTCP) and tubulin tyrosine ligase (TTL), respectively. Post-translationally, acetylation of alpha chains at Lys-40 stabilizes microtubules and affects affinity and processivity of microtubule motors. This modification has a role in multiple cellular functions, ranging from cell motility, cell cycle progression or cell differentiation to intracellular trafficking and signaling.

The protein resides in the cytoplasm. It localises to the cytoskeleton. It catalyses the reaction GTP + H2O = GDP + phosphate + H(+). Tubulin is the major constituent of microtubules, a cylinder consisting of laterally associated linear protofilaments composed of alpha- and beta-tubulin heterodimers. Microtubules grow by the addition of GTP-tubulin dimers to the microtubule end, where a stabilizing cap forms. Below the cap, tubulin dimers are in GDP-bound state, owing to GTPase activity of alpha-tubulin. In Homarus americanus (American lobster), this protein is Tubulin alpha-2 chain.